The following is a 502-amino-acid chain: UPF0371 protein CLL_A2797 (502 aa).

This sequence belongs to the UPF0371 family.

The protein is UPF0371 protein CLL_A2797 of Clostridium botulinum (strain Eklund 17B / Type B).